The sequence spans 395 residues: Multidrug resistance protein MdtL (395 aa).

12 helical membrane-spanning segments follow: residues Phe4–Val24, Ile42–Ala62, Pro69–Ser89, Leu93–Phe113, Leu131–Met151, Ser158–Leu178, Val217–Phe237, Ala247–Phe267, Thr271–His291, Val295–Met315, Val328–Ile350, and Ala355–Val377.

It belongs to the major facilitator superfamily. DHA1 family. MdtL (TC 2.A.1.2.22) subfamily.

The protein localises to the cell inner membrane. The sequence is that of Multidrug resistance protein MdtL from Salmonella schwarzengrund (strain CVM19633).